Reading from the N-terminus, the 475-residue chain is 1-aminocyclopropane-1-carboxylate synthase CMA101 (475 aa).

Lysine 272 bears the N6-(pyridoxal phosphate)lysine mark.

Belongs to the class-I pyridoxal-phosphate-dependent aminotransferase family. As to quaternary structure, homodimer. It depends on pyridoxal 5'-phosphate as a cofactor.

The enzyme catalyses S-adenosyl-L-methionine = 1-aminocyclopropane-1-carboxylate + S-methyl-5'-thioadenosine + H(+). Its pathway is alkene biosynthesis; ethylene biosynthesis via S-adenosyl-L-methionine; ethylene from S-adenosyl-L-methionine: step 1/2. Functionally, catalyzes the formation of 1-aminocyclopropane-1-carboxylate, a direct precursor of ethylene in higher plants. The polypeptide is 1-aminocyclopropane-1-carboxylate synthase CMA101 (ACS2) (Cucurbita maxima (Pumpkin)).